The sequence spans 258 residues: UPF0246 protein plu0566 (258 aa).

Belongs to the UPF0246 family.

The chain is UPF0246 protein plu0566 from Photorhabdus laumondii subsp. laumondii (strain DSM 15139 / CIP 105565 / TT01) (Photorhabdus luminescens subsp. laumondii).